Consider the following 44-residue polypeptide: Protein Tat (44 aa).

The disordered stretch occupies residues 1-44 (APEDSQSHQVSLSKQPASQAGGDPTGPKESKKKVESETETDPVP). The span at 7–18 (SHQVSLSKQPAS) shows a compositional bias: polar residues. Lys-14 participates in a covalent cross-link: Glycyl lysine isopeptide (Lys-Gly) (interchain with G-Cter in ubiquitin). The Cell attachment site motif lies at 21-23 (GGD). Basic and acidic residues predominate over residues 26 to 36 (GPKESKKKVES).

It belongs to the lentiviruses Tat family. Interacts with host CCNT1. Associates with the P-TEFb complex composed at least of Tat, P-TEFb (CDK9 and CCNT1), TAR RNA, RNA Pol II. Recruits the HATs CREBBP, TAF1/TFIID, EP300, PCAF and GCN5L2. Interacts with host KAT5/Tip60; this interaction targets the latter to degradation. Interacts with the host deacetylase SIRT1. Interacts with host capping enzyme RNGTT; this interaction stimulates RNGTT. Binds to host KDR, and to the host integrins ITGAV/ITGB3 and ITGA5/ITGB1. Interacts with host KPNB1/importin beta-1 without previous binding to KPNA1/importin alpha-1. Interacts with EIF2AK2. Interacts with host nucleosome assembly protein NAP1L1; this interaction may be required for the transport of Tat within the nucleus, since the two proteins interact at the nuclear rim. Interacts with host C1QBP/SF2P32; this interaction involves lysine-acetylated Tat. Interacts with the host chemokine receptors CCR2, CCR3 and CXCR4. Interacts with host DPP4/CD26; this interaction may trigger an anti-proliferative effect. Interacts with host LDLR. Interacts with the host extracellular matrix metalloproteinase MMP1. Interacts with host PRMT6; this interaction mediates Tat's methylation. Interacts with, and is ubiquitinated by MDM2/Hdm2. Interacts with host PSMC3 and HTATIP2. Interacts with STAB1; this interaction may overcome SATB1-mediated repression of IL2 and IL2RA (interleukin) in T cells by binding to the same domain than HDAC1. Interacts (when acetylated) with human CDK13, thereby increasing HIV-1 mRNA splicing and promoting the production of the doubly spliced HIV-1 protein Nef. Post-translationally, acetylation by EP300, CREBBP, GCN5L2/GCN5 and PCAF regulates the transactivation activity of Tat. In terms of processing, phosphorylated by EIF2AK2 on serine and threonine residues adjacent to the basic region important for TAR RNA binding and function. Phosphorylation of Tat by EIF2AK2 is dependent on the prior activation of EIF2AK2 by dsRNA. Asymmetrical arginine methylation by host PRMT6 seems to diminish the transactivation capacity of Tat and affects the interaction with host CCNT1. Post-translationally, polyubiquitination by MDM2 does not target Tat to degradation, but activates its transactivation function and fosters interaction with CCNT1 and TAR RNA.

The protein resides in the host nucleus. It is found in the host nucleolus. Its subcellular location is the host cytoplasm. The protein localises to the secreted. Its function is as follows. Transcriptional activator that increases RNA Pol II processivity, thereby increasing the level of full-length viral transcripts. Recognizes a hairpin structure at the 5'-LTR of the nascent viral mRNAs referred to as the transactivation responsive RNA element (TAR) and recruits the cyclin T1-CDK9 complex (P-TEFb complex) that will in turn hyperphosphorylate the RNA polymerase II to allow efficient elongation. The CDK9 component of P-TEFb and other Tat-activated kinases hyperphosphorylate the C-terminus of RNA Pol II that becomes stabilized and much more processive. Other factors such as HTATSF1/Tat-SF1, SUPT5H/SPT5, and HTATIP2 are also important for Tat's function. Besides its effect on RNA Pol II processivity, Tat induces chromatin remodeling of proviral genes by recruiting the histone acetyltransferases (HATs) CREBBP, EP300 and PCAF to the chromatin. This also contributes to the increase in proviral transcription rate, especially when the provirus integrates in transcriptionally silent region of the host genome. To ensure maximal activation of the LTR, Tat mediates nuclear translocation of NF-kappa-B by interacting with host RELA. Through its interaction with host TBP, Tat may also modulate transcription initiation. Tat can reactivate a latently infected cell by penetrating in it and transactivating its LTR promoter. In the cytoplasm, Tat is thought to act as a translational activator of HIV-1 mRNAs. In terms of biological role, extracellular circulating Tat can be endocytosed by surrounding uninfected cells via the binding to several surface receptors such as CD26, CXCR4, heparan sulfate proteoglycans (HSPG) or LDLR. Neurons are rarely infected, but they internalize Tat via their LDLR. Endosomal low pH allows Tat to cross the endosome membrane to enter the cytosol and eventually further translocate into the nucleus, thereby inducing severe cell dysfunctions ranging from cell activation to cell death. Through its interaction with nuclear HATs, Tat is potentially able to control the acetylation-dependent cellular gene expression. Tat seems to inhibit the HAT activity of KAT5/Tip60 and TAF1, and consequently modify the expression of specific cellular genes. Modulates the expression of many cellular genes involved in cell survival, proliferation or in coding for cytokines (such as IL10) or cytokine receptors. May be involved in the derepression of host interleukin IL2 expression. Mediates the activation of cyclin-dependent kinases and dysregulation of microtubule network. Tat plays a role in T-cell and neurons apoptosis. Tat induced neurotoxicity and apoptosis probably contribute to neuroAIDS. Host extracellular matrix metalloproteinase MMP1 cleaves Tat and decreases Tat's mediated neurotoxicity. Circulating Tat also acts as a chemokine-like and/or growth factor-like molecule that binds to specific receptors on the surface of the cells, affecting many cellular pathways. In the vascular system, Tat binds to ITGAV/ITGB3 and ITGA5/ITGB1 integrins dimers at the surface of endothelial cells and competes with bFGF for heparin-binding sites, leading to an excess of soluble bFGF. Binds to KDR/VEGFR-2. All these Tat-mediated effects enhance angiogenesis in Kaposi's sarcoma lesions. The chain is Protein Tat from Human immunodeficiency virus type 1 group M subtype B (isolate BRVA) (HIV-1).